Reading from the N-terminus, the 139-residue chain is Protein GOS9 (139 aa).

One can recognise a Jacalin-type lectin domain in the interval 5 to 139 (LVKIGTWGGN…VDSIGVYVHI (135 aa)).

As to expression, expressed mainly in roots.

The sequence is that of Protein GOS9 (GOS9) from Oryza sativa subsp. indica (Rice).